The sequence spans 308 residues: Taste receptor type 2 member 41 (308 aa).

At 1 to 6 the chain is on the extracellular side; the sequence is MLSTVS. Residues 7–27 traverse the membrane as a helical segment; that stretch reads VFFMSIFVLLCFLGILANGFI. Over 28-60 the chain is Cytoplasmic; sequence VLMLSREWLWRGRLLPSDMILLSLGTSRFCQQC. The helical transmembrane segment at 61–81 threads the bilayer; the sequence is VGLVNSFYYSLHLVEYSRSLA. Residues 82–90 lie on the Extracellular side of the membrane; it reads RQLISLHMD. The helical transmembrane segment at 91-111 threads the bilayer; it reads FLNSATFWFGTWLSVLFCIKI. The Cytoplasmic segment spans residues 112 to 128; it reads ANFSHPAFLWLKWRFPA. A helical membrane pass occupies residues 129-149; that stretch reads LVPWLLLGSILVSFIVTLMFF. At 150-184 the chain is on the extracellular side; it reads WGNHTVYQAFLRRKFSGNTTFKEWNRRLEIDYFMP. N-linked (GlcNAc...) asparagine glycans are attached at residues Asn152 and Asn167. Residues 185-205 traverse the membrane as a helical segment; it reads LKLVTTSIPCSLFLVSILLLI. Residues 206–239 lie on the Cytoplasmic side of the membrane; sequence NSLRRHSQRMQHNAHSLQDPNTQAHSRALKSLIS. Residues 240–260 form a helical membrane-spanning segment; that stretch reads FLVLYALSYVSMVIDATVVIS. Residues 261–264 are Extracellular-facing; the sequence is SDNV. A helical membrane pass occupies residues 265–285; that stretch reads WYWPWQIILYLCMSVHPFILI. Residues 286-308 lie on the Cytoplasmic side of the membrane; it reads TNNLKFRGTFRQLLLLARGFWVT.

The protein belongs to the G-protein coupled receptor T2R family. Expressed in subsets of taste receptor cells of the tongue and palate epithelium and exclusively in gustducin-positive cells. Expressed in 15% taste bud cells in circumvallate and foliate papillae but only in 2% in fungiform papillae. Expressed in the duodenum, antrum and fundus (part of the stomach).

The protein localises to the membrane. In terms of biological role, receptor that may play a role in the perception of bitterness and is gustducin-linked. May play a role in sensing the chemical composition of the gastrointestinal content. The activity of this receptor may stimulate alpha gustducin, mediate PLC-beta-2 activation and lead to the gating of TRPM5. The protein is Taste receptor type 2 member 41 (Tas2r41) of Rattus norvegicus (Rat).